The chain runs to 421 residues: 3-oxoacyl-[acyl-carrier-protein] synthase 2 (421 aa).

A Ketosynthase family 3 (KS3) domain is found at 1 to 417 (MRRVVITGTG…GTNASLILRR (417 aa)). Residues C170, H311, and H347 each act as for beta-ketoacyl synthase activity in the active site.

It belongs to the thiolase-like superfamily. Beta-ketoacyl-ACP synthases family. Homodimer.

It carries out the reaction a fatty acyl-[ACP] + malonyl-[ACP] + H(+) = a 3-oxoacyl-[ACP] + holo-[ACP] + CO2. The enzyme catalyses (9Z)-hexadecenoyl-[ACP] + malonyl-[ACP] + H(+) = 3-oxo-(11Z)-octadecenoyl-[ACP] + holo-[ACP] + CO2. The protein operates within lipid metabolism; fatty acid biosynthesis. In terms of biological role, involved in the type II fatty acid elongation cycle. Catalyzes the elongation of a wide range of acyl-ACP by the addition of two carbons from malonyl-ACP to an acyl acceptor. Can efficiently catalyze the conversion of palmitoleoyl-ACP (cis-hexadec-9-enoyl-ACP) to cis-vaccenoyl-ACP (cis-octadec-11-enoyl-ACP), an essential step in the thermal regulation of fatty acid composition. This Rhizobium meliloti (strain 1021) (Ensifer meliloti) protein is 3-oxoacyl-[acyl-carrier-protein] synthase 2 (fabF).